The following is a 158-amino-acid chain: Pyruvoyl-dependent arginine decarboxylase (158 aa).

Residue Ser-44 is modified to Pyruvic acid (Ser).

The protein belongs to the PdaD family. The cofactor is pyruvate.

It catalyses the reaction L-arginine + H(+) = agmatine + CO2. This chain is Pyruvoyl-dependent arginine decarboxylase, found in Pyrococcus abyssi (strain GE5 / Orsay).